A 172-amino-acid chain; its full sequence is Conglutin-7 (172 aa).

A signal peptide spans 1-21; the sequence is MAKLTILVALALFLLAAHASA. 4 cysteine pairs are disulfide-bonded: Cys-33–Cys-116, Cys-45–Cys-103, Cys-104–Cys-152, and Cys-118–Cys-160. Residues 54-98 are disordered; that stretch reads QRDEDSYGRDPYSPSQDPYSPSQDPDRRDPYSPSPYDRRGAGSSQ. Residues 62–76 are compositionally biased toward low complexity; that stretch reads RDPYSPSQDPYSPSQ. 4-hydroxyproline occurs at positions 67, 74, and 86. The span at 77 to 98 shows a compositional bias: basic and acidic residues; it reads DPDRRDPYSPSPYDRRGAGSSQ.

It belongs to the 2S seed storage albumins family. In terms of processing, the hydroxyproline modifications determined by mass spectrometry are probably 4-hydroxyproline as determined for other extracellular plant proteins. In terms of tissue distribution, expressed in seeds, not expressed in leaves, roots and pegs.

Functionally, weak inhibitor of trypsin. The sequence is that of Conglutin-7 from Arachis hypogaea (Peanut).